We begin with the raw amino-acid sequence, 262 residues long: Ribosomal RNA small subunit methyltransferase A (262 aa).

Residues Asn-14, Leu-16, Gly-41, Glu-62, Asp-87, and Asn-109 each coordinate S-adenosyl-L-methionine.

The protein belongs to the class I-like SAM-binding methyltransferase superfamily. rRNA adenine N(6)-methyltransferase family. RsmA subfamily.

The protein localises to the cytoplasm. It catalyses the reaction adenosine(1518)/adenosine(1519) in 16S rRNA + 4 S-adenosyl-L-methionine = N(6)-dimethyladenosine(1518)/N(6)-dimethyladenosine(1519) in 16S rRNA + 4 S-adenosyl-L-homocysteine + 4 H(+). Functionally, specifically dimethylates two adjacent adenosines (A1518 and A1519) in the loop of a conserved hairpin near the 3'-end of 16S rRNA in the 30S particle. May play a critical role in biogenesis of 30S subunits. In Francisella tularensis subsp. tularensis (strain FSC 198), this protein is Ribosomal RNA small subunit methyltransferase A.